A 329-amino-acid chain; its full sequence is Serpentine receptor class alpha-8 (329 aa).

Transmembrane regions (helical) follow at residues 26–46 (VDLI…KMVL), 60–80 (FLNI…VVVI), 141–161 (IFVG…TGKL), 187–207 (TIHF…SVAL), 231–251 (VIES…FMFI), and 273–293 (FWVV…LLLI).

It belongs to the nematode receptor-like protein sra family.

The protein localises to the membrane. In Caenorhabditis elegans, this protein is Serpentine receptor class alpha-8 (sra-8).